The following is a 224-amino-acid chain: Ribonuclease T (224 aa).

One can recognise an Exonuclease domain in the interval 32 to 206 (VVVDVETGGF…YDTEKTAELF (175 aa)). Residues Asp-35, Glu-37, His-193, and Asp-198 each coordinate Mg(2+). His-193 serves as the catalytic Proton donor/acceptor.

The protein belongs to the RNase T family. As to quaternary structure, homodimer. Mg(2+) is required as a cofactor.

Trims short 3' overhangs of a variety of RNA species, leaving a one or two nucleotide 3' overhang. Responsible for the end-turnover of tRNA: specifically removes the terminal AMP residue from uncharged tRNA (tRNA-C-C-A). Also appears to be involved in tRNA biosynthesis. This chain is Ribonuclease T, found in Pseudomonas aeruginosa (strain UCBPP-PA14).